The chain runs to 586 residues: SPbeta prophage-derived uncharacterized protein YorA (586 aa).

13 PbH1 repeats span residues 108–147 (AENVIIRGGRIIGDRYQHDYSLIDTDRKTHEWGFGIHVHG), 148–170 (SKNVLIENVQISDCIGDNIWIAA), 184–206 (SKSVTVRKCELKRGRRNNLATNG), 207–235 (CEGLLVEDCDIEEAGGDTIGPQLGIDLEG), 246–268 (PYELTISDCRFRKNGRGSVTAHT), 288–313 (STDVSIKGNKIINEGGSKEYGIDSVG), 320–341 (GNRIQITDNNIQGFKIGMMIRG), 364–384 (AEDVSISNNRIQDSDCIQIQV), 387–410 (SSDIKVSNNKGKGTTSAYAIKVMD), 411–432 (SNDVKFLNNTFSNLYGGLYCER), 435–456 (AVRIKLNDFLLSGKGYGIYWDK), 481–504 (MYNIRISDNQIYNCKAIIAIHLIG), and 505–531 (GSEHMVRGNEIMFNRDSDQGYGIYLNG).

This chain is SPbeta prophage-derived uncharacterized protein YorA (yorA), found in Bacillus subtilis (strain 168).